The sequence spans 544 residues: Phosphoacetylglucosamine mutase (544 aa).

Serine 66 acts as the Phosphoserine intermediate in catalysis. Positions 66, 290, 292, and 294 each coordinate Mg(2+). Residues 387–389 (EAN), 512–516 (RASGT), and arginine 521 each bind substrate.

This sequence belongs to the phosphohexose mutase family. Mg(2+) is required as a cofactor.

The enzyme catalyses N-acetyl-alpha-D-glucosamine 1-phosphate = N-acetyl-D-glucosamine 6-phosphate. Its pathway is nucleotide-sugar biosynthesis; UDP-N-acetyl-alpha-D-glucosamine biosynthesis; N-acetyl-alpha-D-glucosamine 1-phosphate from alpha-D-glucosamine 6-phosphate (route I): step 2/2. In terms of biological role, catalyzes the conversion of GlcNAc-6-P into GlcNAc-1-P during the synthesis of uridine diphosphate/UDP-GlcNAc, which is a biosynthetic precursor of chitin and also supplies the amino sugars for N-linked oligosaccharides of glycoproteins. The protein is Phosphoacetylglucosamine mutase of Candida albicans (Yeast).